The sequence spans 553 residues: Glycine betaine/proline/choline transporter VP1723 (553 aa).

12 helical membrane passes run 43-63, 85-105, 122-142, 191-211, 231-251, 278-298, 310-330, 362-382, 393-413, 443-463, 490-510, and 515-535; these read NRVF…TLTF, FFLA…VTPL, AGWL…FFGV, WALH…IFSF, VWGW…VFGL, TQVV…VAGL, MILA…MAIL, WTAF…MFIA, FIIC…TAFG, VMPF…VFFI, VFWC…GGLA, and MAVT…VSLI.

Belongs to the BCCT transporter (TC 2.A.15) family.

It localises to the cell inner membrane. Functionally, involved in the uptake of osmoprotectants. Can transport glycine betaine, proline and choline. This Vibrio parahaemolyticus serotype O3:K6 (strain RIMD 2210633) protein is Glycine betaine/proline/choline transporter VP1723.